The following is a 173-amino-acid chain: Glutamyl-tRNA(Gln) amidotransferase subunit C-1, mitochondrial (173 aa).

Residues 1–23 constitute a mitochondrion transit peptide; that stretch reads MIRIPFRLRPPPGRTLHSLVRTF. Positions 51–70 are disordered; sequence PSKVPQRPHKSTTTVGQSTP. Positions 61-70 are enriched in polar residues; it reads STTTVGQSTP.

The protein belongs to the GatC family. As to quaternary structure, subunit of the heterotrimeric GatCAB amidotransferase (AdT) complex, composed of A, B and C subunits.

The protein localises to the mitochondrion. The catalysed reaction is L-glutamyl-tRNA(Gln) + L-glutamine + ATP + H2O = L-glutaminyl-tRNA(Gln) + L-glutamate + ADP + phosphate + H(+). Its function is as follows. Allows the formation of correctly charged Gln-tRNA(Gln) through the transamidation of misacylated Glu-tRNA(Gln) in the mitochondria. The reaction takes place in the presence of glutamine and ATP through an activated gamma-phospho-Glu-tRNA(Gln). The chain is Glutamyl-tRNA(Gln) amidotransferase subunit C-1, mitochondrial from Culex quinquefasciatus (Southern house mosquito).